The primary structure comprises 887 residues: Pyruvate, phosphate dikinase 2 (887 aa).

At Thr467 the chain carries Phosphothreonine; by PDRP1. His469 functions as the Tele-phosphohistidine intermediate in the catalytic mechanism. Substrate-binding residues include Arg575, Arg632, Glu761, Gly782, Thr783, Asn784, and Asp785. A Mg(2+)-binding site is contributed by Glu761. Asp785 lines the Mg(2+) pocket. The Proton donor role is filled by Cys847.

This sequence belongs to the PEP-utilizing enzyme family. Mg(2+) is required as a cofactor.

The protein resides in the cytoplasm. It catalyses the reaction pyruvate + phosphate + ATP = phosphoenolpyruvate + AMP + diphosphate + H(+). In terms of biological role, formation of phosphoenolpyruvate. This Oryza sativa subsp. japonica (Rice) protein is Pyruvate, phosphate dikinase 2 (PPDK2).